Reading from the N-terminus, the 161-residue chain is Nucleotide-binding protein PputW619_0959 (161 aa).

It belongs to the YajQ family.

Its function is as follows. Nucleotide-binding protein. This chain is Nucleotide-binding protein PputW619_0959, found in Pseudomonas putida (strain W619).